Consider the following 121-residue polypeptide: Large ribosomal subunit protein bL12 (121 aa).

This sequence belongs to the bacterial ribosomal protein bL12 family. As to quaternary structure, homodimer. Part of the ribosomal stalk of the 50S ribosomal subunit. Forms a multimeric L10(L12)X complex, where L10 forms an elongated spine to which 2 to 4 L12 dimers bind in a sequential fashion. Binds GTP-bound translation factors.

Forms part of the ribosomal stalk which helps the ribosome interact with GTP-bound translation factors. Is thus essential for accurate translation. The polypeptide is Large ribosomal subunit protein bL12 (Escherichia coli O81 (strain ED1a)).